The sequence spans 130 residues: Small ribosomal subunit protein uS9 (130 aa).

Belongs to the universal ribosomal protein uS9 family.

The chain is Small ribosomal subunit protein uS9 (rpsI) from Shigella flexneri.